The following is a 185-amino-acid chain: GTP cyclohydrolase 1 (185 aa).

3 residues coordinate Zn(2+): C75, H78, and C146.

It belongs to the GTP cyclohydrolase I family. In terms of assembly, toroid-shaped homodecamer, composed of two pentamers of five dimers.

The enzyme catalyses GTP + H2O = 7,8-dihydroneopterin 3'-triphosphate + formate + H(+). It participates in cofactor biosynthesis; 7,8-dihydroneopterin triphosphate biosynthesis; 7,8-dihydroneopterin triphosphate from GTP: step 1/1. The chain is GTP cyclohydrolase 1 from Methylococcus capsulatus (strain ATCC 33009 / NCIMB 11132 / Bath).